A 341-amino-acid polypeptide reads, in one-letter code: DER1-like family member protein 1 (341 aa).

Residues 1 to 41 lie on the Cytoplasmic side of the membrane; the sequence is MAGPRNVRTLHGNGGRNNDVMGPKEFWLNIPPITRTLFTLA. The chain crosses the membrane as a helical span at residues 42–62; the sequence is IVMTIVGRLNLINPWYFIYVW. Residues 63-122 lie on the Lumenal side of the membrane; sequence NLTFKKVQIWRLLTSCVMLSSRAMPALMELYSIYDRSSQLERGHFGPGLSNRRGPMVTVD. Residues 123 to 143 form a helical membrane-spanning segment; it reads YAYYLCFCILAITTATTIIYG. Topologically, residues 144 to 170 are cytoplasmic; the sequence is SYYPVVLTSGFISCITYTWSIDNANVQ. Residues 171-191 traverse the membrane as a helical segment; sequence IMFYGLIPVWGKYFPLIQLFI. Residue Ser-192 is a topological domain, lumenal. A helical membrane pass occupies residues 193–213; it reads FVFNEGDFVISLIGFTTGYLY. Topologically, residues 214–341 are cytoplasmic; sequence TCLDTHTLGP…GQTNSPSDSQ (128 aa). Polar residues-rich tracts occupy residues 276–286 and 296–341; these read SSQRETRTFSG and ATLS…SDSQ. Residues 276–341 are disordered; sequence SSQRETRTFS…GQTNSPSDSQ (66 aa).

Belongs to the derlin family.

The protein localises to the endoplasmic reticulum membrane. In terms of biological role, may be involved in the degradation process of some misfolded endoplasmic reticulum (ER) luminal proteins. Its precise role is however unclear and its inability to complement der1 mutations, suggests either that it is not involved in degradation process of misfolded proteins, or that it participates in the destruction of specific misfolded ER luminal proteins. This is DER1-like family member protein 1 (DFM1) from Saccharomyces cerevisiae (strain ATCC 204508 / S288c) (Baker's yeast).